An 86-amino-acid polypeptide reads, in one-letter code: Toxin CngtIV (86 aa).

The first 19 residues, 1–19 (MNSLLIITACLVLIGTVWA), serve as a signal peptide directing secretion. The region spanning 20 to 84 (KDGYLVDVKG…TWPLPNKRCG (65 aa)) is the LCN-type CS-alpha/beta domain. Intrachain disulfides connect Cys30–Cys83, Cys34–Cys59, Cys43–Cys64, and Cys47–Cys66.

This sequence belongs to the long (4 C-C) scorpion toxin superfamily. Sodium channel inhibitor family. Beta subfamily. As to expression, expressed by the venom gland.

The protein localises to the secreted. Functionally, beta toxins bind voltage-independently at site-4 of sodium channels (Nav) and shift the voltage of activation toward more negative potentials thereby affecting sodium channel activation and promoting spontaneous and repetitive firing. This Centruroides noxius (Mexican scorpion) protein is Toxin CngtIV.